The primary structure comprises 319 residues: Acetyl-coenzyme A carboxylase carboxyl transferase subunit alpha (319 aa).

The CoA carboxyltransferase C-terminal domain occupies 35–296 (NIDEEVHRLR…KAQLLADLAD (262 aa)).

This sequence belongs to the AccA family. In terms of assembly, acetyl-CoA carboxylase is a heterohexamer composed of biotin carboxyl carrier protein (AccB), biotin carboxylase (AccC) and two subunits each of ACCase subunit alpha (AccA) and ACCase subunit beta (AccD).

The protein resides in the cytoplasm. The enzyme catalyses N(6)-carboxybiotinyl-L-lysyl-[protein] + acetyl-CoA = N(6)-biotinyl-L-lysyl-[protein] + malonyl-CoA. It functions in the pathway lipid metabolism; malonyl-CoA biosynthesis; malonyl-CoA from acetyl-CoA: step 1/1. In terms of biological role, component of the acetyl coenzyme A carboxylase (ACC) complex. First, biotin carboxylase catalyzes the carboxylation of biotin on its carrier protein (BCCP) and then the CO(2) group is transferred by the carboxyltransferase to acetyl-CoA to form malonyl-CoA. The polypeptide is Acetyl-coenzyme A carboxylase carboxyl transferase subunit alpha (Citrobacter koseri (strain ATCC BAA-895 / CDC 4225-83 / SGSC4696)).